We begin with the raw amino-acid sequence, 307 residues long: Dihydroorotate dehydrogenase B (NAD(+)), catalytic subunit (307 aa).

FMN contacts are provided by residues S21 and 45–46 (KA). Residues K45 and 69–73 (NAIGL) each bind substrate. FMN contacts are provided by N101 and N129. Position 129 (N129) interacts with substrate. C132 acts as the Nucleophile in catalysis. Residues K167 and I193 each contribute to the FMN site. 194–195 (NT) contributes to the substrate binding site. FMN-binding positions include G219, 245 to 246 (GG), and 267 to 268 (GT).

Belongs to the dihydroorotate dehydrogenase family. Type 1 subfamily. Heterotetramer of 2 PyrK and 2 PyrD type B subunits. Requires FMN as cofactor.

The protein localises to the cytoplasm. It carries out the reaction (S)-dihydroorotate + NAD(+) = orotate + NADH + H(+). It participates in pyrimidine metabolism; UMP biosynthesis via de novo pathway; orotate from (S)-dihydroorotate (NAD(+) route): step 1/1. In terms of biological role, catalyzes the conversion of dihydroorotate to orotate with NAD(+) as electron acceptor. This Cutibacterium acnes (strain DSM 16379 / KPA171202) (Propionibacterium acnes) protein is Dihydroorotate dehydrogenase B (NAD(+)), catalytic subunit (pyrD).